The primary structure comprises 147 residues: Large ribosomal subunit protein uL15 (147 aa).

Residues 1 to 42 are disordered; it reads MTIKVHHLRPAPGAKTAKTRVGRGEGSKGKTAGRGTKGSKAR.

Belongs to the universal ribosomal protein uL15 family. In terms of assembly, part of the 50S ribosomal subunit.

In terms of biological role, binds to the 23S rRNA. This Salinispora arenicola (strain CNS-205) protein is Large ribosomal subunit protein uL15.